The sequence spans 93 residues: YcgL domain-containing protein VV1_0131 (93 aa).

One can recognise a YcgL domain in the interval 1–84 (MLCSIYKSSK…PPENLLQQHK (84 aa)). Positions 72-93 (LPPPPENLLQQHKERKAQQKND) are disordered.

The polypeptide is YcgL domain-containing protein VV1_0131 (Vibrio vulnificus (strain CMCP6)).